Consider the following 902-residue polypeptide: Desmocollin-2 (902 aa).

An N-terminal signal peptide occupies residues 1-27 (MAAVGSMRSGSPAFGLGHLLTLAILAL). A propeptide spanning residues 28–135 (ASDACKEVVL…TEKVLSRAKR (108 aa)) is cleaved from the precursor. 5 Cadherin domains span residues 136-243 (RWAP…YPIF), 244-355 (TQKL…LPTF), 356-471 (TRTT…GPEC), 472-579 (IPPM…FIPK), and 580-694 (QTVV…RLGP). Topologically, residues 136–694 (RWAPIPCSML…TGYADVRLGP (559 aa)) are extracellular. N-linked (GlcNAc...) asparagine glycosylation occurs at asparagine 166. 3 N-linked (GlcNAc...) asparagine glycosylation sites follow: asparagine 392, asparagine 546, and asparagine 629. A helical membrane pass occupies residues 695–715 (WAILAILLGIALLFCILFTLV). Topologically, residues 716–902 (CSVSRASKQQ…RTLAEVCAKR (187 aa)) are cytoplasmic. Phosphoserine is present on residues serine 865, serine 869, and serine 874.

In terms of assembly, interacts with DSP, PKP2 and JUP. Interacts with DSG3; the interaction may limit the interaction of DSC3 with p38MAPK family members and therefore repress p38MAPK signaling activation. As to expression, expressed in intestinal epithelial cells (at protein level). Expressed in the heart. Expressed in tongue, bladder, stomach, liver, kidney, and lung.

Its subcellular location is the cell membrane. It localises to the cell junction. It is found in the desmosome. A component of desmosome cell-cell junctions which are required for positive regulation of cellular adhesion. Promotes timely incorporation of DSG2 into desmosome intercellular junctions and promotes interaction of desmosome cell junctions with intermediate filament cytokeratin, via modulation of DSP phosphorylation. Plays an important role in desmosome-mediated maintenance of intestinal epithelial cell intercellular adhesion strength and barrier function. Positively regulates wound healing of intestinal mucosa via promotion of epithelial cell migration, and also plays a role in mechanotransduction of force between intestinal epithelial cells and extracellular matrix. May contribute to epidermal cell positioning (stratification) by mediating differential adhesiveness between cells that express different isoforms. May promote p38MAPK signaling activation that facilitates keratinocyte migration. The chain is Desmocollin-2 (Dsc2) from Mus musculus (Mouse).